The chain runs to 329 residues: uncharacterized protein (329 aa).

9 helical membrane-spanning segments follow: residues 5 to 24 (NLLL…FLTV), 34 to 56 (IAVA…YLIF), 92 to 114 (FGYI…LEWG), 124 to 146 (IIFF…VLFY), 159 to 181 (SANF…LLSL), 196 to 218 (TAHR…LQYL), 231 to 253 (FSIV…LGAY), 263 to 285 (LIGV…RLFG), and 306 to 328 (FWLF…RILT).

It is found in the cell membrane. This is an uncharacterized protein from Archaeoglobus fulgidus (strain ATCC 49558 / DSM 4304 / JCM 9628 / NBRC 100126 / VC-16).